Reading from the N-terminus, the 368-residue chain is tRNA-specific 2-thiouridylase MnmA (368 aa).

Residues 6–13 (ALSGGVDS) and Met-32 contribute to the ATP site. The active-site Nucleophile is Cys-92. Cys-92 and Cys-186 are oxidised to a cystine. Gly-116 lines the ATP pocket. Residues 134 to 136 (KDQ) are interaction with tRNA. Cys-186 (cysteine persulfide intermediate) is an active-site residue. The interval 292-293 (RY) is interaction with tRNA.

It belongs to the MnmA/TRMU family.

The protein localises to the cytoplasm. The catalysed reaction is S-sulfanyl-L-cysteinyl-[protein] + uridine(34) in tRNA + AH2 + ATP = 2-thiouridine(34) in tRNA + L-cysteinyl-[protein] + A + AMP + diphosphate + H(+). Its function is as follows. Catalyzes the 2-thiolation of uridine at the wobble position (U34) of tRNA, leading to the formation of s(2)U34. This is tRNA-specific 2-thiouridylase MnmA from Campylobacter hominis (strain ATCC BAA-381 / DSM 21671 / CCUG 45161 / LMG 19568 / NCTC 13146 / CH001A).